The chain runs to 405 residues: Cystathionine gamma-lyase (405 aa).

Substrate contacts are provided by arginine 62, tyrosine 114, and arginine 119. Lysine 212 carries the N6-(pyridoxal phosphate)lysine modification. Glutamate 339 is a substrate binding site.

The protein belongs to the trans-sulfuration enzymes family. Homotetramer. Interacts with CALM in a calcium-dependent manner. Requires pyridoxal 5'-phosphate as cofactor.

It localises to the cytoplasm. It catalyses the reaction L,L-cystathionine + H2O = 2-oxobutanoate + L-cysteine + NH4(+). The catalysed reaction is L-cysteine + H2O = hydrogen sulfide + pyruvate + NH4(+) + H(+). It carries out the reaction L-homocysteine + H2O = 2-oxobutanoate + hydrogen sulfide + NH4(+) + H(+). The enzyme catalyses L-homoserine = 2-oxobutanoate + NH4(+). It catalyses the reaction L-selenocystathionine + H2O = L-selenocysteine + 2-oxobutanoate + NH4(+). It participates in amino-acid biosynthesis; L-cysteine biosynthesis; L-cysteine from L-homocysteine and L-serine: step 2/2. Its function is as follows. Catalyzes the last step in the trans-sulfuration pathway from L-methionine to L-cysteine in a pyridoxal-5'-phosphate (PLP)-dependent manner, which consists on cleaving the L,L-cystathionine molecule into L-cysteine, ammonia and 2-oxobutanoate. Part of the L-cysteine derived from the trans-sulfuration pathway is utilized for biosynthesis of the ubiquitous antioxidant glutathione. Besides its role in the conversion of L-cystathionine into L-cysteine, it utilizes L-cysteine and L-homocysteine as substrates (at much lower rates than L,L-cystathionine) to produce hydrogen sulfide (H2S). In vitro, it converts two L-cysteine molecules into lanthionine and H2S, and two L-homocysteine molecules to homolanthionine and H2S, which can be particularly relevant under conditions of severe hyperhomocysteinemia. Lanthionine and homolanthionine are structural homologs of L,L-cystathionine that differ by the absence or presence of an extra methylene group, respectively. Acts as a cysteine-protein sulfhydrase by mediating sulfhydration of target proteins: sulfhydration consists of converting -SH groups into -SSH on specific cysteine residues of target proteins such as GAPDH, PTPN1 and NF-kappa-B subunit RELA, thereby regulating their function. By generating the gasotransmitter H2S, it participates in a number of physiological processes such as vasodilation, bone protection, and inflammation. Plays an essential role in myogenesis by contributing to the biogenesis of H2S in skeletal muscle tissue. Can also accept homoserine as substrate. Catalyzes the elimination of selenocystathionine (which can be derived from the diet) to yield selenocysteine, ammonia and 2-oxobutanoate. This is Cystathionine gamma-lyase (CTH) from Sus scrofa (Pig).